We begin with the raw amino-acid sequence, 159 residues long: Ribosomal RNA large subunit methyltransferase H (159 aa).

Residues I76, G108, and 127–132 (FSKMTF) contribute to the S-adenosyl-L-methionine site.

It belongs to the RNA methyltransferase RlmH family. In terms of assembly, homodimer.

The protein localises to the cytoplasm. The enzyme catalyses pseudouridine(1915) in 23S rRNA + S-adenosyl-L-methionine = N(3)-methylpseudouridine(1915) in 23S rRNA + S-adenosyl-L-homocysteine + H(+). Specifically methylates the pseudouridine at position 1915 (m3Psi1915) in 23S rRNA. This is Ribosomal RNA large subunit methyltransferase H from Clostridium botulinum (strain Loch Maree / Type A3).